Reading from the N-terminus, the 105-residue chain is Large ribosomal subunit protein uL24 (105 aa).

This sequence belongs to the universal ribosomal protein uL24 family. As to quaternary structure, part of the 50S ribosomal subunit.

In terms of biological role, one of two assembly initiator proteins, it binds directly to the 5'-end of the 23S rRNA, where it nucleates assembly of the 50S subunit. Its function is as follows. One of the proteins that surrounds the polypeptide exit tunnel on the outside of the subunit. The polypeptide is Large ribosomal subunit protein uL24 (Mycolicibacterium smegmatis (strain ATCC 700084 / mc(2)155) (Mycobacterium smegmatis)).